The sequence spans 214 residues: Putative pyrophosphatase PpaX (214 aa).

Aspartate 8 serves as the catalytic Nucleophile.

It belongs to the HAD-like hydrolase superfamily. PpaX family. The cofactor is Mg(2+).

It carries out the reaction diphosphate + H2O = 2 phosphate + H(+). This is Putative pyrophosphatase PpaX from Clostridium perfringens (strain 13 / Type A).